The sequence spans 232 residues: Putative homeobox protein NANOG2 (232 aa).

The tract at residues 1–39 (MDLPIQDSHDSSTSPKGKQPTTAEKSATKKEDKVPVKKQ) is disordered. A compositionally biased stretch (polar residues) spans 11–25 (SSTSPKGKQPTTAEK). Residues 26–35 (SATKKEDKVP) show a composition bias toward basic and acidic residues. 8 consecutive repeat copies span residues 123–127 (WSNQT), 128–132 (WNNST), 133–137 (WSNQT), 143–147 (WSNHS), 148–152 (WNTQT), 153–157 (WCTQS), 158–162 (WNNQA), and 163–167 (WNSPF). Residues 123–167 (WSNQTWNNSTWSNQTQNIQSWSNHSWNTQTWCTQSWNNQAWNSPF) are 8 X repeats starting with a Trp in each unit. Residues 123–167 (WSNQTWNNSTWSNQTQNIQSWSNHSWNTQTWCTQSWNNQAWNSPF) form a sufficient for transactivation activity region. A sufficient for strong transactivation activity region spans residues 168–232 (YNCGEESLQS…YSTNMXXEDV (65 aa)).

Belongs to the Nanog homeobox family.

It localises to the nucleus. Probable transcriptional regulator. The chain is Putative homeobox protein NANOG2 (NANOGP1) from Pan paniscus (Pygmy chimpanzee).